The following is a 95-amino-acid chain: Putative ESAT-6-like protein X (95 aa).

A disordered region spans residues 72 to 95 (HGQKVQRASSSMADTDRSVSSAWS).

It belongs to the WXG100 family.

This chain is Putative ESAT-6-like protein X, found in Mycobacterium leprae (strain TN).